The primary structure comprises 86 residues: Cytochrome c-555 (86 aa).

Positions 14, 17, 18, and 60 each coordinate heme c.

In terms of processing, binds 1 heme c group covalently per subunit.

This basic c-type monoheme cytochrome has been found exclusively in the green photosynthetic bacteria, although its role in bacterial photosynthesis is not established. It has an unusually low redox potential compared with mitochondrial cytochrome c. It is reactive with cytochrome c oxidases but not with reductases. This chain is Cytochrome c-555, found in Chlorobaculum thiosulfatiphilum (Chlorobium limicola f.sp. thiosulfatophilum).